A 493-amino-acid polypeptide reads, in one-letter code: Probable mannosyl-oligosaccharide alpha-1,2-mannosidase 1B (493 aa).

The signal sequence occupies residues 1 to 18; the sequence is MHLPSLSVALALVSSSLA. Asn-87 and Asn-174 each carry an N-linked (GlcNAc...) asparagine glycan. Residues Cys-324 and Cys-353 are joined by a disulfide bond. Residue Glu-367 is the Proton donor of the active site. An N-linked (GlcNAc...) asparagine glycan is attached at Asn-489.

This sequence belongs to the glycosyl hydrolase 47 family. As to quaternary structure, monomer. It depends on Ca(2+) as a cofactor. The cofactor is Mg(2+).

It is found in the cytoplasmic vesicle lumen. It catalyses the reaction N(4)-(alpha-D-Man-(1-&gt;2)-alpha-D-Man-(1-&gt;2)-alpha-D-Man-(1-&gt;3)-[alpha-D-Man-(1-&gt;2)-alpha-D-Man-(1-&gt;3)-[alpha-D-Man-(1-&gt;2)-alpha-D-Man-(1-&gt;6)]-alpha-D-Man-(1-&gt;6)]-beta-D-Man-(1-&gt;4)-beta-D-GlcNAc-(1-&gt;4)-beta-D-GlcNAc)-L-asparaginyl-[protein] (N-glucan mannose isomer 9A1,2,3B1,2,3) + 4 H2O = N(4)-(alpha-D-Man-(1-&gt;3)-[alpha-D-Man-(1-&gt;3)-[alpha-D-Man-(1-&gt;6)]-alpha-D-Man-(1-&gt;6)]-beta-D-Man-(1-&gt;4)-beta-D-GlcNAc-(1-&gt;4)-beta-D-GlcNAc)-L-asparaginyl-[protein] (N-glucan mannose isomer 5A1,2) + 4 beta-D-mannose. It carries out the reaction N(4)-(alpha-D-Man-(1-&gt;2)-alpha-D-Man-(1-&gt;2)-alpha-D-Man-(1-&gt;3)-[alpha-D-Man-(1-&gt;3)-[alpha-D-Man-(1-&gt;2)-alpha-D-Man-(1-&gt;6)]-alpha-D-Man-(1-&gt;6)]-beta-D-Man-(1-&gt;4)-beta-D-GlcNAc-(1-&gt;4)-beta-D-GlcNAc)-L-asparaginyl-[protein] (N-glucan mannose isomer 8A1,2,3B1,3) + 3 H2O = N(4)-(alpha-D-Man-(1-&gt;3)-[alpha-D-Man-(1-&gt;3)-[alpha-D-Man-(1-&gt;6)]-alpha-D-Man-(1-&gt;6)]-beta-D-Man-(1-&gt;4)-beta-D-GlcNAc-(1-&gt;4)-beta-D-GlcNAc)-L-asparaginyl-[protein] (N-glucan mannose isomer 5A1,2) + 3 beta-D-mannose. It functions in the pathway protein modification; protein glycosylation. Functionally, involved in the maturation of Asn-linked oligosaccharides. Progressively trims alpha-1,2-linked mannose residues from Man(9)GlcNAc(2) to produce Man(5)GlcNAc(2). The protein is Probable mannosyl-oligosaccharide alpha-1,2-mannosidase 1B (mns1B) of Aspergillus fumigatus (strain CBS 144.89 / FGSC A1163 / CEA10) (Neosartorya fumigata).